The primary structure comprises 2435 residues: ATP-binding cassette sub-family A member 2 (2435 aa).

The N-linked (GlcNAc...) asparagine glycan is linked to Asn14. A run of 2 helical transmembrane segments spans residues 22–42 (PWVLAFEIFIPLVLFFILLGL) and 54–74 (AFYTAAPLTSAGILPVMQSLC). Residues Asn89, Asn168, and Asn173 are each glycosylated (N-linked (GlcNAc...) asparagine). Gln271 is modified (N5-methylglutamine). 13 N-linked (GlcNAc...) asparagine glycosylation sites follow: Asn305, Asn368, Asn379, Asn420, Asn432, Asn476, Asn484, Asn494, Asn530, Asn544, Asn590, Asn600, and Asn628. Helical transmembrane passes span 699–719 (FLFVIEHMMPLCMVISWVYSV), 750–770 (VAWFITGFVQLSISVTALTAI), 782–802 (VVIIWLFLAVYAVATIMFCFL), 813–833 (ASACGGIIYFLSYVPYMYVAI), 857–877 (AFGLGSKYFALYEVAGVGIQW), and 893–913 (LLAVTMLMVDAVVYGILTWYI). In terms of domain architecture, ABC transporter 1 spans 990-1221 (VCVDKLTKVY…YGDGYRLTLV (232 aa)). Residue 1024-1031 (GHNGAGKT) participates in ATP binding. Disordered regions lie at residues 1223–1243 (RPAEPGGPQEPGLASSPPGRA) and 1325–1357 (DQSLENSEADVKESRKDVLPGAEGPASGEGHAG). Phosphoserine occurs at positions 1238, 1327, and 1331. Positions 1333–1342 (ADVKESRKDV) are enriched in basic and acidic residues. Residue Asn1408 is glycosylated (N-linked (GlcNAc...) asparagine). The chain crosses the membrane as a helical span at residues 1456-1476 (ALFSQILLPAFFVCVAMTVAL). N-linked (GlcNAc...) asparagine glycosylation is found at Asn1496, Asn1549, and Asn1557. Residues 1586–1610 (SNFVPPPPSPAPSDSPASPDEDLQA) are disordered. A compositionally biased stretch (pro residues) spans 1589–1598 (VPPPPSPAPS). Residues Asn1612, Asn1677, and Asn1775 are each glycosylated (N-linked (GlcNAc...) asparagine). 5 consecutive transmembrane segments (helical) span residues 1792-1812 (VVIAIFIIVAMSFVPASFVVF), 1841-1861 (VWDMLNYLVPATCCVIILFVF), 1872-1892 (FPAVLSLFLLYGWSITPIMYP), 1905-1925 (VFLIVINLFIGITATVATFLL), and 1991-2011 (GLVAMAVEGVVGFLLTIMCQY). An ABC transporter 2 domain is found at 2050–2285 (VKIENLTKVY…FGDGYMITVR (236 aa)). Asn2054 carries an N-linked (GlcNAc...) asparagine glycan. 2087 to 2094 (GVNGAGKT) serves as a coordination point for ATP. Residue Thr2412 is modified to Phosphothreonine.

It belongs to the ABC transporter superfamily. ABCA family. In terms of processing, methylated at Gln-271 by N6AMT1. In terms of tissue distribution, highly expressed in the brain,peripheral blood leukocytes and ovary, whereas lower levels of expression is observed in kidney and liver. Weakly expressed in brain and highly in peripheral blood leukocytes.

It is found in the endosome membrane. The protein localises to the lysosome membrane. Probable lipid transporter that modulates cholesterol sequestration in the late endosome/lysosome by regulating the intracellular sphingolipid metabolism, in turn participates in cholesterol homeostasis. May alter the transbilayer distribution of ceramide in the intraluminal membrane lipid bilayer, favoring its retention in the outer leaflet that results in increased acid ceramidase activity in the late endosome/lysosome, facilitating ceramide deacylation to sphingosine leading to the sequestration of free cholesterol in lysosomes. In addition regulates amyloid-beta production either by activating a signaling pathway that regulates amyloid precursor protein transcription through the modulation of sphingolipid metabolism or through its role in gamma-secretase processing of APP. May play a role in myelin formation. In Homo sapiens (Human), this protein is ATP-binding cassette sub-family A member 2.